A 559-amino-acid polypeptide reads, in one-letter code: Probable inorganic carbon transporter subunit DabB1 (559 aa).

13 helical membrane passes run 4 to 24 (LQWL…LFAA), 33 to 53 (LSVA…VAYI), 76 to 96 (LSSI…VYSI), 106 to 126 (PRFF…VAAG), 173 to 193 (LVLA…PTLF), 202 to 222 (ATIM…LSAF), 240 to 260 (GPTP…GFII), 273 to 293 (VLHM…VLML), 310 to 330 (MGFM…FHLI), 375 to 395 (LPWL…LVIA), 408 to 428 (GAIV…FATH), 440 to 460 (MMIL…GHAF), and 487 to 507 (GLVF…YLAS).

This sequence belongs to the inorganic carbon transporter (TC 9.A.2) DabB family. In terms of assembly, forms a complex with DabA1.

It localises to the cell inner membrane. Functionally, part of an energy-coupled inorganic carbon pump. The sequence is that of Probable inorganic carbon transporter subunit DabB1 from Halothiobacillus neapolitanus (strain ATCC 23641 / c2) (Thiobacillus neapolitanus).